The following is a 775-amino-acid chain: Glycerol-3-phosphate acyltransferase (775 aa).

Positions 268 to 273 (HRSYID) match the HXXXXD motif motif.

Belongs to the GPAT/DAPAT family.

Its subcellular location is the cell membrane. It catalyses the reaction sn-glycerol 3-phosphate + an acyl-CoA = a 1-acyl-sn-glycero-3-phosphate + CoA. It functions in the pathway phospholipid metabolism; CDP-diacylglycerol biosynthesis; CDP-diacylglycerol from sn-glycerol 3-phosphate: step 1/3. The protein is Glycerol-3-phosphate acyltransferase (plsB) of Mycobacterium leprae (strain TN).